The primary structure comprises 108 residues: UPF0060 membrane protein DSY4157 (108 aa).

Transmembrane regions (helical) follow at residues 6–26 (ILFI…WLWL), 31–51 (PYWY…IPTL), 60–80 (VYAA…WGVD), and 86–106 (TYDW…LWAP).

It belongs to the UPF0060 family.

It is found in the cell membrane. The protein is UPF0060 membrane protein DSY4157 of Desulfitobacterium hafniense (strain Y51).